Here is a 474-residue protein sequence, read N- to C-terminus: Glutamate--tRNA ligase (474 aa).

Positions 18 to 28 (PSPTGFLHIGG) match the 'HIGH' region motif. The short motif at 244–248 (KLSKR) is the 'KMSKS' region element. An ATP-binding site is contributed by lysine 247.

Belongs to the class-I aminoacyl-tRNA synthetase family. Glutamate--tRNA ligase type 1 subfamily. Monomer.

The protein localises to the cytoplasm. The enzyme catalyses tRNA(Glu) + L-glutamate + ATP = L-glutamyl-tRNA(Glu) + AMP + diphosphate. Its function is as follows. Catalyzes the attachment of glutamate to tRNA(Glu) in a two-step reaction: glutamate is first activated by ATP to form Glu-AMP and then transferred to the acceptor end of tRNA(Glu). The sequence is that of Glutamate--tRNA ligase from Caulobacter sp. (strain K31).